Here is a 69-residue protein sequence, read N- to C-terminus: Cytochrome b-c1 complex subunit 6-1, mitochondrial (69 aa).

Cystine bridges form between cysteine 17/cysteine 59 and cysteine 31/cysteine 45.

This sequence belongs to the UQCRH/QCR6 family. As to quaternary structure, component of the ubiquinol-cytochrome c oxidoreductase (cytochrome b-c1 complex, complex III, CIII), a multisubunit enzyme composed of 10 subunits. The complex is composed of 3 respiratory subunits cytochrome b (MT-CYB), cytochrome c1 (CYC1-1 or CYC1-2) and Rieske protein (UCR1-1 or UCR1-2), 2 core protein subunits MPPalpha1 (or MPPalpha2) and MPPB, and 5 low-molecular weight protein subunits QCR7-1 (or QCR7-2), UCRQ-1 (or UCRQ-2), QCR9, UCRY and probably QCR6-1 (or QCR6-2). The complex exists as an obligatory dimer and forms supercomplexes (SCs) in the inner mitochondrial membrane with NADH-ubiquinone oxidoreductase (complex I, CI), resulting in different assemblies (supercomplexes SCI(1)III(2) and SCI(2)III(4)).

It localises to the mitochondrion inner membrane. Component of the ubiquinol-cytochrome c oxidoreductase, a multisubunit transmembrane complex that is part of the mitochondrial electron transport chain which drives oxidative phosphorylation. The respiratory chain contains 3 multisubunit complexes succinate dehydrogenase (complex II, CII), ubiquinol-cytochrome c oxidoreductase (cytochrome b-c1 complex, complex III, CIII) and cytochrome c oxidase (complex IV, CIV), that cooperate to transfer electrons derived from NADH and succinate to molecular oxygen, creating an electrochemical gradient over the inner membrane that drives transmembrane transport and the ATP synthase. The cytochrome b-c1 complex catalyzes electron transfer from ubiquinol to cytochrome c, linking this redox reaction to translocation of protons across the mitochondrial inner membrane, with protons being carried across the membrane as hydrogens on the quinol. In the process called Q cycle, 2 protons are consumed from the matrix, 4 protons are released into the intermembrane space and 2 electrons are passed to cytochrome c. The polypeptide is Cytochrome b-c1 complex subunit 6-1, mitochondrial (QCR6-1) (Arabidopsis thaliana (Mouse-ear cress)).